Here is a 250-residue protein sequence, read N- to C-terminus: 23S rRNA (guanosine-2'-O-)-methyltransferase RlmB (250 aa).

Residues Gly198, Ile218, and Leu227 each coordinate S-adenosyl-L-methionine.

Belongs to the class IV-like SAM-binding methyltransferase superfamily. RNA methyltransferase TrmH family. RlmB subfamily.

It localises to the cytoplasm. The enzyme catalyses guanosine(2251) in 23S rRNA + S-adenosyl-L-methionine = 2'-O-methylguanosine(2251) in 23S rRNA + S-adenosyl-L-homocysteine + H(+). Specifically methylates the ribose of guanosine 2251 in 23S rRNA. This Coxiella burnetii (strain RSA 493 / Nine Mile phase I) protein is 23S rRNA (guanosine-2'-O-)-methyltransferase RlmB.